A 578-amino-acid polypeptide reads, in one-letter code: Leucine-rich repeat-containing protein 15 (578 aa).

The first 21 residues, 1–21 (MPLKHYLLLLVGCQAWALGLA), serve as a signal peptide directing secretion. An LRRNT domain is found at 22-53 (YYGCPSECTCSRASQVECTGARIVAMPTPLPW). Topologically, residues 22 to 535 (YYGCPSECTC…TWGMTEAQSG (514 aa)) are extracellular. 15 LRR repeats span residues 54–75 (NAMSLQVVNTHITELPENLFLN), 78–99 (ALIALKMEKNELSTIMPGAFRN), 102–123 (SLRYLSLANNKLRMLPIRVFQD), 126–147 (NLESLLLSNNQLVQIQPAQFSQ), 150–171 (NLRELQLHGNNLESIPEEAFDH), 174–195 (GLTKLNLGRNSFTHLSPRLFQH), 198–219 (NLQVLRLHENRLSDIPMGTFDA), 222–243 (NLQELALQENQIGTLSPGLFHN), 246–267 (NLQRLYLSNNHISQLPPGIFMQ), 270–291 (QLNKLTLFGNSLRELSPGVFGP), 294–315 (NLRELWLYNNHITSLADNTFSH), 318–339 (QLQVLILSHNQLTYISPGAFNG), 342–363 (NLRELSLHTNALQDLDSNVFRS), 366–387 (NLQNISLQSNRLRQLPGSIFAN), and 390–411 (GLTTIQLQNNNLENLPLGIFDH). N-linked (GlcNAc...) asparagine glycosylation is present at asparagine 75. Asparagine 369 is a glycosylation site (N-linked (GlcNAc...) asparagine). In terms of domain architecture, LRRCT spans 423–473 (NPWRCDSDILPLHNWLLLNRARLGTDTLPVCSSPANVRGQSLVIININFPG). A disordered region spans residues 476-500 (VQGPETPEVPSYPDTPSYPDTTSVS). A helical transmembrane segment spans residues 536–556 (LAIAAIVIGIIALACSLAACI). The Cytoplasmic segment spans residues 557–578 (CCCCCKKRSQAVLMQMKAPNEC).

The protein localises to the cell membrane. The sequence is that of Leucine-rich repeat-containing protein 15 (Lrrc15) from Rattus norvegicus (Rat).